Consider the following 102-residue polypeptide: MKYLLIFLLVLAIFVISVTLGAQNDQQVTFNYLLAQGEYRISTLLAVLFAAGFAIGWLICGLFWLRVRVSLARAERKIKRLENQLSPATDVAVVPHSSAAKE.

Residues 1-2 (MK) are Cytoplasmic-facing. The helical transmembrane segment at 3–23 (YLLIFLLVLAIFVISVTLGAQ) threads the bilayer. Residues 24 to 43 (NDQQVTFNYLLAQGEYRIST) are Periplasmic-facing. A helical transmembrane segment spans residues 44–64 (LLAVLFAAGFAIGWLICGLFW). A coiled-coil region spans residues 64 to 92 (WLRVRVSLARAERKIKRLENQLSPATDVA). Topologically, residues 65 to 102 (LRVRVSLARAERKIKRLENQLSPATDVAVVPHSSAAKE) are cytoplasmic.

Belongs to the LapA family.

It is found in the cell inner membrane. Functionally, involved in the assembly of lipopolysaccharide (LPS). The protein is Lipopolysaccharide assembly protein A of Escherichia coli (strain K12).